The chain runs to 344 residues: Protein pelota homolog (344 aa).

Belongs to the eukaryotic release factor 1 family. Pelota subfamily. Monomer. A divalent metal cation is required as a cofactor.

The protein resides in the cytoplasm. Functionally, may function in recognizing stalled ribosomes, interact with stem-loop structures in stalled mRNA molecules, and effect endonucleolytic cleavage of the mRNA. May play a role in the release non-functional ribosomes and degradation of damaged mRNAs. Has endoribonuclease activity. In Saccharolobus islandicus (strain Y.N.15.51 / Yellowstone #2) (Sulfolobus islandicus), this protein is Protein pelota homolog.